The sequence spans 439 residues: Xylose isomerase (439 aa).

Active-site residues include H101 and D104. Mg(2+) contacts are provided by E232, E268, H271, D296, D307, D309, and D339.

It belongs to the xylose isomerase family. As to quaternary structure, homotetramer. Mg(2+) serves as cofactor.

The protein resides in the cytoplasm. It carries out the reaction alpha-D-xylose = alpha-D-xylulofuranose. This Haemophilus influenzae (strain PittGG) protein is Xylose isomerase.